Here is a 369-residue protein sequence, read N- to C-terminus: Uroporphyrinogen decarboxylase (369 aa).

Coproporphyrinogen I-binding residues include arginine 39, alanine 41, arginine 43, arginine 52, aspartate 88, tyrosine 166, serine 221, and histidine 341. Coproporphyrinogen III contacts are provided by arginine 39, alanine 41, and arginine 43. Coproporphyrinogen III is bound by residues aspartate 88, tyrosine 166, serine 221, and histidine 341.

It belongs to the uroporphyrinogen decarboxylase family. Homodimer.

The protein resides in the cytoplasm. Its subcellular location is the cytosol. The enzyme catalyses uroporphyrinogen III + 4 H(+) = coproporphyrinogen III + 4 CO2. It carries out the reaction uroporphyrinogen I + 4 H(+) = coproporphyrinogen I + 4 CO2. It participates in porphyrin-containing compound metabolism; protoporphyrin-IX biosynthesis; coproporphyrinogen-III from 5-aminolevulinate: step 4/4. Functionally, catalyzes the sequential decarboxylation of the four acetate side chains of uroporphyrinogen to form coproporphyrinogen and participates in the fifth step in the heme biosynthetic pathway. Isomer I or isomer III of uroporphyrinogen may serve as substrate, but only coproporphyrinogen III can ultimately be converted to heme. In vitro also decarboxylates pentacarboxylate porphyrinogen I. This chain is Uroporphyrinogen decarboxylase, found in Danio rerio (Zebrafish).